We begin with the raw amino-acid sequence, 400 residues long: Na(+)/H(+) antiporter NhaA (400 aa).

The next 12 helical transmembrane spans lie at 26–46 (AGGI…NSPL), 71–91 (LIHW…GMEV), 107–127 (IFPA…YWFI), 137–157 (GWAI…ALLS), 166–186 (IFLL…IALF), 189–209 (HGLS…LILL), 212–232 (FKVS…ASVL), 233–253 (KSGV…PLKG), 273–293 (FVIL…GIDV), 299–319 (PLLL…IFGF), 340–360 (IFAV…LASL), and 373–393 (LSRL…YLFL).

The protein belongs to the NhaA Na(+)/H(+) (TC 2.A.33) antiporter family.

It localises to the cell inner membrane. It carries out the reaction Na(+)(in) + 2 H(+)(out) = Na(+)(out) + 2 H(+)(in). Functionally, na(+)/H(+) antiporter that extrudes sodium in exchange for external protons. The protein is Na(+)/H(+) antiporter NhaA of Haemophilus influenzae (strain PittEE).